The following is a 371-amino-acid chain: Phospho-N-acetylmuramoyl-pentapeptide-transferase (371 aa).

9 consecutive transmembrane segments (helical) span residues 25–45 (TLLA…WLIA), 77–94 (MGGL…ALWA), 136–156 (IGWQ…HPAS), 172–192 (LIPH…IVGF), 204–224 (GLAI…AYVA), 240–260 (GTGE…AFLW), 269–289 (FMGD…AFMI), 296–316 (VIVG…VGVF), and 348–368 (KVVL…LATL).

This sequence belongs to the glycosyltransferase 4 family. MraY subfamily. Requires Mg(2+) as cofactor.

The protein localises to the cell inner membrane. It carries out the reaction UDP-N-acetyl-alpha-D-muramoyl-L-alanyl-gamma-D-glutamyl-meso-2,6-diaminopimeloyl-D-alanyl-D-alanine + di-trans,octa-cis-undecaprenyl phosphate = di-trans,octa-cis-undecaprenyl diphospho-N-acetyl-alpha-D-muramoyl-L-alanyl-D-glutamyl-meso-2,6-diaminopimeloyl-D-alanyl-D-alanine + UMP. The protein operates within cell wall biogenesis; peptidoglycan biosynthesis. In terms of biological role, catalyzes the initial step of the lipid cycle reactions in the biosynthesis of the cell wall peptidoglycan: transfers peptidoglycan precursor phospho-MurNAc-pentapeptide from UDP-MurNAc-pentapeptide onto the lipid carrier undecaprenyl phosphate, yielding undecaprenyl-pyrophosphoryl-MurNAc-pentapeptide, known as lipid I. The chain is Phospho-N-acetylmuramoyl-pentapeptide-transferase from Opitutus terrae (strain DSM 11246 / JCM 15787 / PB90-1).